The chain runs to 442 residues: Type 3 secretion system ATPase (442 aa).

Residue 173-178 (GVGKST) coordinates ATP.

The protein belongs to the ATPase alpha/beta chains family. T3SS ATPase subfamily. The core secretion machinery of the T3SS is composed of approximately 20 different proteins, including cytoplasmic components, a base, an export apparatus and a needle. This subunit is part of the cytosolic complex. Forms homohexamers.

The protein resides in the cytoplasm. The enzyme catalyses ATP + H2O + cellular proteinSide 1 = ADP + phosphate + cellular proteinSide 2.. ATPase component of the type III secretion system (T3SS), also called injectisome, which is used to inject bacterial effector proteins into eukaryotic host cells. Acts as a molecular motor to provide the energy that is required for the export of proteins. Required for type III secretion apparatus (T3SA) formation, proper protein secretion, host cell invasion and virulence. May play a critical role in T3SS substrate recognition, disassembly of the effector/chaperone complex and unfolding of the effector in an ATP-dependent manner prior to secretion. This Xanthomonas euvesicatoria protein is Type 3 secretion system ATPase.